A 1131-amino-acid chain; its full sequence is Tyrosine-protein kinase JAK2 (1131 aa).

The interaction with cytokine/interferon/growth hormone receptors stretch occupies residues Met-1–Gln-239. An FERM domain is found at Pro-37–His-380. Position 119 is a phosphotyrosine; by autocatalysis (Tyr-119). Residues Tyr-372 and Tyr-373 each carry the phosphotyrosine modification. Residues His-401 to Gln-482 form the SH2; atypical domain. Residue Ser-523 is modified to Phosphoserine. The 265-residue stretch at Leu-545–Phe-809 folds into the Protein kinase 1 domain. A phosphotyrosine mark is found at Tyr-570 and Tyr-813. The Protein kinase 2 domain occupies Leu-849–Ile-1126. Residue Leu-855 to Val-863 coordinates ATP. Tyr-868 carries the phosphotyrosine; by autocatalysis modification. Lys-882 provides a ligand contact to ATP. Phosphotyrosine; by autocatalysis is present on residues Tyr-966 and Tyr-972. The active-site Proton acceptor is Asp-976. Phosphotyrosine; by autocatalysis occurs at positions 1007 and 1008.

Belongs to the protein kinase superfamily. Tyr protein kinase family. JAK subfamily. Interacts with IL23R, SKB1 and STAM2. Interacts with EPOR. Interacts with LYN. Interacts with SIRPA. Interacts with SH2B1. Interacts with TEC. Interacts with IFNGR2 (via intracellular domain). Interacts with LEPR (Isoform B). Interacts with HSP90AB1; promotes functional activation in a heat shock-dependent manner. Interacts with STRA6. Interacts with ASB2; the interaction targets JAK2 for Notch-induced proteasomal degradation. The cofactor is Mg(2+). Post-translationally, autophosphorylated, leading to regulate its activity. Leptin promotes phosphorylation on tyrosine residues, including phosphorylation on Tyr-813. Autophosphorylation on Tyr-119 in response to EPO down-regulates its kinase activity. Autophosphorylation on Tyr-868, Tyr-966 and Tyr-972 in response to growth hormone (GH) are required for maximal kinase activity. Also phosphorylated by TEC. Phosphorylated on tyrosine residues in response to interferon gamma signaling. Phosphorylated on tyrosine residues in response to a signaling cascade that is activated by increased cellular retinol. Undergoes Notch-induced ubiquitination and subsequent proteasomal degradation which is mediated by ASB1 or ASB2, the substrate-recognition components of probable ECS E3 ubiquitin-protein ligase complexes.

It localises to the endomembrane system. The protein resides in the cytoplasm. It is found in the nucleus. It catalyses the reaction L-tyrosyl-[protein] + ATP = O-phospho-L-tyrosyl-[protein] + ADP + H(+). Regulated by autophosphorylation, can both activate or decrease activity. Heme regulates its activity by enhancing the phosphorylation on Tyr-1007 and Tyr-1008. Non-receptor tyrosine kinase involved in various processes such as cell growth, development, differentiation or histone modifications. Mediates essential signaling events in both innate and adaptive immunity. In the cytoplasm, plays a pivotal role in signal transduction via its association with type I receptors such as growth hormone (GHR), prolactin (PRLR), leptin (LEPR), erythropoietin (EPOR), thrombopoietin (THPO); or type II receptors including IFN-alpha, IFN-beta, IFN-gamma and multiple interleukins. Following ligand-binding to cell surface receptors, phosphorylates specific tyrosine residues on the cytoplasmic tails of the receptor, creating docking sites for STATs proteins. Subsequently, phosphorylates the STATs proteins once they are recruited to the receptor. Phosphorylated STATs then form homodimer or heterodimers and translocate to the nucleus to activate gene transcription. For example, cell stimulation with erythropoietin (EPO) during erythropoiesis leads to JAK2 autophosphorylation, activation, and its association with erythropoietin receptor (EPOR) that becomes phosphorylated in its cytoplasmic domain. Then, STAT5 (STAT5A or STAT5B) is recruited, phosphorylated and activated by JAK2. Once activated, dimerized STAT5 translocates into the nucleus and promotes the transcription of several essential genes involved in the modulation of erythropoiesis. Part of a signaling cascade that is activated by increased cellular retinol and that leads to the activation of STAT5 (STAT5A or STAT5B). In addition, JAK2 mediates angiotensin-2-induced ARHGEF1 phosphorylation. Plays a role in cell cycle by phosphorylating CDKN1B. Cooperates with TEC through reciprocal phosphorylation to mediate cytokine-driven activation of FOS transcription. In the nucleus, plays a key role in chromatin by specifically mediating phosphorylation of 'Tyr-41' of histone H3 (H3Y41ph), a specific tag that promotes exclusion of CBX5 (HP1 alpha) from chromatin. Up-regulates the potassium voltage-gated channel activity of KCNA3. The sequence is that of Tyrosine-protein kinase JAK2 from Sus scrofa (Pig).